The sequence spans 331 residues: DNA-directed RNA polymerase subunit alpha (331 aa).

Positions 1–237 are alpha N-terminal domain (alpha-NTD); the sequence is MQSSVTEFLI…NQLESFVYLR (237 aa). The tract at residues 251–331 is alpha C-terminal domain (alpha-CTD); that stretch reads FDPILLRPVD…NWPPDNILDN (81 aa).

Belongs to the RNA polymerase alpha chain family. In terms of assembly, homodimer. The RNAP catalytic core consists of 2 alpha, 1 beta, 1 beta' and 1 omega subunit. When a sigma factor is associated with the core the holoenzyme is formed, which can initiate transcription.

The catalysed reaction is RNA(n) + a ribonucleoside 5'-triphosphate = RNA(n+1) + diphosphate. Functionally, DNA-dependent RNA polymerase catalyzes the transcription of DNA into RNA using the four ribonucleoside triphosphates as substrates. The polypeptide is DNA-directed RNA polymerase subunit alpha (Buchnera aphidicola subsp. Baizongia pistaciae (strain Bp)).